A 505-amino-acid polypeptide reads, in one-letter code: Ent-kaurene oxidase 2 (505 aa).

The chain crosses the membrane as a helical span at residues 3–23; the sequence is AFVPGGAGAAAAAVGGFVAAA. Heme is bound at residue cysteine 449.

It belongs to the cytochrome P450 family. Heme is required as a cofactor. As to expression, widely expressed.

The protein resides in the membrane. The catalysed reaction is ent-kaur-16-ene + 3 reduced [NADPH--hemoprotein reductase] + 3 O2 = ent-kaur-16-en-19-oate + 3 oxidized [NADPH--hemoprotein reductase] + 4 H2O + 4 H(+). Its pathway is plant hormone biosynthesis; gibberellin biosynthesis. In terms of biological role, catalyzes three successive oxidations of the 4-methyl group of ent-kaurene giving kaurenoic acid, a key step in gibberellins (GAs) biosynthesis. GAs, which are involved many processes, including stem elongation, play a central role in plant development. The chain is Ent-kaurene oxidase 2 from Oryza sativa subsp. japonica (Rice).